Reading from the N-terminus, the 451-residue chain is Methylenetetrahydrofolate--tRNA-(uracil-5-)-methyltransferase TrmFO (451 aa).

9-14 (GGGMAG) provides a ligand contact to FAD.

Belongs to the MnmG family. TrmFO subfamily. FAD is required as a cofactor.

Its subcellular location is the cytoplasm. It catalyses the reaction uridine(54) in tRNA + (6R)-5,10-methylene-5,6,7,8-tetrahydrofolate + NADH + H(+) = 5-methyluridine(54) in tRNA + (6S)-5,6,7,8-tetrahydrofolate + NAD(+). The enzyme catalyses uridine(54) in tRNA + (6R)-5,10-methylene-5,6,7,8-tetrahydrofolate + NADPH + H(+) = 5-methyluridine(54) in tRNA + (6S)-5,6,7,8-tetrahydrofolate + NADP(+). Functionally, catalyzes the folate-dependent formation of 5-methyl-uridine at position 54 (M-5-U54) in all tRNAs. The sequence is that of Methylenetetrahydrofolate--tRNA-(uracil-5-)-methyltransferase TrmFO from Dinoroseobacter shibae (strain DSM 16493 / NCIMB 14021 / DFL 12).